The following is a 140-amino-acid chain: Immunity protein RhsIC (140 aa).

Its function is as follows. Putative immunity protein component of a toxin-immunity protein module, which may function as a cellular contact-dependent growth inhibition (CDI) system. Blocks the toxic effects of expression of the C-terminus (residues 1519-1658) of cognate toxin RhsC in E.coli. The protein is Immunity protein RhsIC (rhsIC) of Dickeya dadantii (strain 3937) (Erwinia chrysanthemi (strain 3937)).